We begin with the raw amino-acid sequence, 540 residues long: 2,3-bisphosphoglycerate-independent phosphoglycerate mutase (540 aa).

The Mn(2+) site is built by aspartate 25 and serine 75. Serine 75 serves as the catalytic Phosphoserine intermediate. Substrate is bound by residues histidine 136, 166–167 (RD), arginine 198, arginine 204, 269–272 (RPDR), and lysine 342. Mn(2+) contacts are provided by aspartate 409, histidine 413, aspartate 450, histidine 451, and histidine 468.

This sequence belongs to the BPG-independent phosphoglycerate mutase family. In terms of assembly, monomer. It depends on Mn(2+) as a cofactor.

The catalysed reaction is (2R)-2-phosphoglycerate = (2R)-3-phosphoglycerate. Its pathway is carbohydrate degradation; glycolysis; pyruvate from D-glyceraldehyde 3-phosphate: step 3/5. Catalyzes the interconversion of 2-phosphoglycerate and 3-phosphoglycerate. The chain is 2,3-bisphosphoglycerate-independent phosphoglycerate mutase from Prochlorococcus marinus subsp. pastoris (strain CCMP1986 / NIES-2087 / MED4).